Here is a 229-residue protein sequence, read N- to C-terminus: Enolase-phosphatase E1 (229 aa).

This sequence belongs to the HAD-like hydrolase superfamily. MasA/MtnC family. Monomer. It depends on Mg(2+) as a cofactor.

The enzyme catalyses 5-methylsulfanyl-2,3-dioxopentyl phosphate + H2O = 1,2-dihydroxy-5-(methylsulfanyl)pent-1-en-3-one + phosphate. It participates in amino-acid biosynthesis; L-methionine biosynthesis via salvage pathway; L-methionine from S-methyl-5-thio-alpha-D-ribose 1-phosphate: step 3/6. It functions in the pathway amino-acid biosynthesis; L-methionine biosynthesis via salvage pathway; L-methionine from S-methyl-5-thio-alpha-D-ribose 1-phosphate: step 4/6. Its function is as follows. Bifunctional enzyme that catalyzes the enolization of 2,3-diketo-5-methylthiopentyl-1-phosphate (DK-MTP-1-P) into the intermediate 2-hydroxy-3-keto-5-methylthiopentenyl-1-phosphate (HK-MTPenyl-1-P), which is then dephosphorylated to form the acireductone 1,2-dihydroxy-3-keto-5-methylthiopentene (DHK-MTPene). The protein is Enolase-phosphatase E1 of Erwinia tasmaniensis (strain DSM 17950 / CFBP 7177 / CIP 109463 / NCPPB 4357 / Et1/99).